The sequence spans 130 residues: Insulin-like growth factor 1 (130 aa).

Positions 1 to 25 are cleaved as a signal peptide; the sequence is MHAVSSSHLFYLAFCLLVLTSSATA. Residues 26-54 are b; it reads GPETLCGAELVDALQFVCGDRGFYFNKPT. Disulfide bonds link Cys31–Cys73, Cys43–Cys86, and Cys72–Cys77. The interval 55–66 is c; it reads GYGSSSRRAPQT. Residues 67–87 are a; that stretch reads GIVDECCFRSCDLRRLEMYCA. A d region spans residues 88-95; it reads PLKPAKSA. The propeptide at 96 to 130 is e peptide; sequence RSVRAQRHTDMPKTQKEVHLKNASRGSAGNKNYRM. A disordered region spans residues 97–130; the sequence is SVRAQRHTDMPKTQKEVHLKNASRGSAGNKNYRM. Over residues 102 to 115 the composition is skewed to basic and acidic residues; the sequence is RHTDMPKTQKEVHL. The segment covering 119–130 has biased composition (polar residues); that stretch reads SRGSAGNKNYRM.

It belongs to the insulin family. In terms of assembly, forms a ternary complex with IGFR1 and ITGAV:ITGB3. Forms a ternary complex with IGFR1 and ITGA6:ITGB4. Forms a ternary complex with IGFBP3 and ALS.

It is found in the secreted. Its function is as follows. The insulin-like growth factors, isolated from plasma, are structurally and functionally related to insulin but have a much higher growth-promoting activity. May be a physiological regulator of [1-14C]-2-deoxy-D-glucose (2DG) transport and glycogen synthesis in osteoblasts. Stimulates glucose transport in bone-derived osteoblastic (PyMS) cells and is effective at much lower concentrations than insulin, not only regarding glycogen and DNA synthesis but also with regard to enhancing glucose uptake. May play a role in synapse maturation. Ca(2+)-dependent exocytosis of IGF1 is required for sensory perception of smell in the olfactory bulb. Acts as a ligand for IGF1R. Binds to the alpha subunit of IGF1R, leading to the activation of the intrinsic tyrosine kinase activity which autophosphorylates tyrosine residues in the beta subunit thus initiating a cascade of down-stream signaling events leading to activation of the PI3K-AKT/PKB and the Ras-MAPK pathways. Binds to integrins ITGAV:ITGB3 and ITGA6:ITGB4. Its binding to integrins and subsequent ternary complex formation with integrins and IGFR1 are essential for IGF1 signaling. Induces the phosphorylation and activation of IGFR1, MAPK3/ERK1, MAPK1/ERK2 and AKT1. As part of the MAPK/ERK signaling pathway, acts as a negative regulator of apoptosis in cardiomyocytes via promotion of STUB1/CHIP-mediated ubiquitination and degradation of ICER-type isoforms of CREM. The protein is Insulin-like growth factor 1 of Cavia porcellus (Guinea pig).